Reading from the N-terminus, the 1850-residue chain is Vitellogenin-2 (1850 aa).

The first 15 residues, 1 to 15 (MRGIILALVLTLVGS), serve as a signal peptide directing secretion. One can recognise a Vitellogenin domain in the interval 24-662 (FNSRRSYLYN…SPRTMFPSAI (639 aa)). N-linked (GlcNAc...) asparagine glycosylation is present at Asn-604. Residues 935-984 (DAPLDVTEEPFQTSERASREHFAMQGPDSMPRKQSHSSREDLRRSTGKRA) form a disordered region. Asn-1094 carries N-linked (GlcNAc...) asparagine glycosylation. Disordered regions lie at residues 1115-1313 (GTEP…SSSS) and 1338-1362 (EFPK…SHDT). Residues 1122 to 1143 (TSSSSSSASSTATSSSSSSASS) show a composition bias toward low complexity. A compositionally biased stretch (basic and acidic residues) spans 1156-1165 (DQVKQARNKD). Residues 1167–1266 (SSSSRSSKSS…SRSSSSSSKS (100 aa)) show a composition bias toward low complexity. N-linked (GlcNAc...) asparagine glycosylation is found at Asn-1177 and Asn-1188. The segment covering 1267-1277 (SSHHSHSHHSG) has biased composition (basic residues). Residues 1278–1291 (HLNGSSSSSSSSRS) show a composition bias toward low complexity. Asn-1280 carries an N-linked (GlcNAc...) asparagine glycan. Residues 1338–1350 (EFPKRKLPGDRAT) show a composition bias toward basic and acidic residues. N-linked (GlcNAc...) asparagine glycans are attached at residues Asn-1417, Asn-1597, and Asn-1665. The VWFD domain maps to 1579–1756 (ARCSVSYNKI…SWILEEAPCR (178 aa)). 2 cysteine pairs are disulfide-bonded: Cys-1581/Cys-1719 and Cys-1604/Cys-1755.

Phosvitin, an egg yolk storage protein, is one of the most highly phosphorylated (10%) proteins in nature. Post-translationally, cathepsin D is responsible for intraoocytic processing of vitellogenin. In terms of processing, may contain intrachain disulfide bonds. After incorporation from serum via a specific receptor, it is cleaved into four fragments, heavy and light chain lipovitellins, phosphovitin and YGP40, and YGP40 is released into the yolk plasma before or during compartmentation of lipovitellin-phosvitin complex into the yolk granule.

Its function is as follows. Precursor of the major egg-yolk proteins that are sources of nutrients during early development of oviparous organisms. Functionally, phosvitin is believed to be of importance in sequestering calcium, iron and other cations for the developing embryo. This Gallus gallus (Chicken) protein is Vitellogenin-2 (VTG2).